We begin with the raw amino-acid sequence, 626 residues long: Protein ALEX (626 aa).

4 disordered regions span residues 1–29, 173–223, 236–473, and 556–612; these read MMARPVDPQRSPDPTFRSSTRHSGKLEPM, TTAH…AAHP, AAPG…APRS, and AASV…NNSR. 2 stretches are compositionally biased toward polar residues: residues 186–195 and 255–270; these read KSTAAASSRQ and GSTTLPSTWTAPQSRL. Residues 281–312 are compositionally biased toward basic and acidic residues; sequence QIRESEQRDPQLRRKQQRWKEPLMPRREEKYP. Residues 337-346 are compositionally biased toward low complexity; the sequence is QPILTPGQPQ. Pro residues predominate over residues 366 to 399; it reads IPTPGQPLPPQPIPTPGRPLTPQPIPTPGRPLTP. The span at 416 to 435 shows a compositional bias: low complexity; the sequence is RLLRPGQPMSPQLRQTQGLP. The span at 436 to 445 shows a compositional bias: pro residues; that stretch reads LPQPLLPPGQ. Residues 570–579 show a composition bias toward basic residues; that stretch reads ALSRSRRYPW. Residues 600–611 show a composition bias toward polar residues; sequence RRNAVSSSTNNS.

Belongs to the ALEX family. Interacts with the N-terminal region of the XLas isoforms of guanine nucleotide-binding protein G(s) subunit alpha.

Its subcellular location is the cell membrane. It is found in the cell projection. It localises to the ruffle. Functionally, may inhibit the adenylyl cyclase-stimulating activity of guanine nucleotide-binding protein G(s) subunit alpha which is produced from the same locus in a different open reading frame. The sequence is that of Protein ALEX from Homo sapiens (Human).